The chain runs to 510 residues: Protein PLASTID TRANSCRIPTIONALLY ACTIVE 16, chloroplastic (510 aa).

Residues 1–14 (MASSSTSFPLTTAP) are compositionally biased toward polar residues. Residues 1-19 (MASSSTSFPLTTAPPQGVR) constitute a chloroplast transit peptide. Disordered stretches follow at residues 1-24 (MASS…NRRK) and 38-58 (LGKT…NPFQ). Positions 41-51 (TKGDDDSEGKQ) are enriched in basic and acidic residues. 94-123 (IFVAGATGQAGIRIAQTLLQRGFSVRAGVP) is a binding site for NADP(+). A coiled-coil region spans residues 354-403 (ARERAEEEAKVAADKAREAAEAAKEFEKQMQKLSEKEAEAASLAEDAQQK). Serine 395 bears the Phosphoserine mark. Residue threonine 451 is modified to Phosphothreonine; by STN7. Positions 453–493 (RGQAKARNLPPKKAVVKQRPSSPFASKPKEERPKKPEKEVR) are disordered. Residues 479–493 (KPKEERPKKPEKEVR) show a composition bias toward basic and acidic residues.

The protein belongs to the NAD(P)-dependent epimerase/dehydratase family. Component of the plastid transcriptionally active chromosome required for plastid gene expression. Interacts with DEGP1 under high light conditions and maybe its degradation target. Post-translationally, excluded from chloroplast nucleoid when phosphorylated on Thr-451 by STN7 that may regulate membrane-anchoring functions of the nucleoid.

The protein resides in the plastid. It is found in the chloroplast stroma. The protein localises to the chloroplast nucleoid. Its subcellular location is the chloroplast thylakoid membrane. In terms of biological role, probably involved in the regulation of plastid gene expression. This Arabidopsis thaliana (Mouse-ear cress) protein is Protein PLASTID TRANSCRIPTIONALLY ACTIVE 16, chloroplastic.